We begin with the raw amino-acid sequence, 1066 residues long: MEDSFNTTSSASTFTLQSSSETMVSIQLLDFRTSLLEALEELRMRRKAETQYEEQIAKIILETQELKWQKEALQNQKEALIKQHKEAMGVLKNQLQMKMYALEEEKGKYKLATEIKEKEIEGLKETLKTLQVSQYSLQKKVSEMEQKAHLYHLAKEDYHKQLNEIEKYYAAITNQFGLVRENHVKLEQNVQEAIQLNKRLSTLNEKQESEIHSLKKELKKAASELIKSKVTCQHKMEEESIDLIIKEQKYEELQERLNMELEVNKKINEEITHIQEEKQDIIISFQHMQQLLQQETQANTEIDAELKVLRENNQTLERDNELQREKVKENEEKFLSLEKEHERALGTWKKHVEELSGEMNVIKNELSSLRETHAKLQEHYNKLCEQKKTEEYKKFQNVPELNNENSDELTRKKSENIITQKYNSGPEIWGKNTKSFCLDTEYREEEKKDLPVGKTAEDLQPFEISAKSEINTMVSQDRNQSGMSPHRVLCLDKDATDQEQTSDVTDSRKSVTVEVKDKLCLEKASGCSEFKSLNNFFLVVDESLETEMVRLEGTEGLGLLHSGGDIPLDTRSNKASSNGMSNEMAHKRNYNTDGSESNPFKQQSKLLPADLENATEKEITNQDQTKAGLDSFLDIKLNLDPCKKHGLQDSSHVTLDVKHQKIKQMVREESQCSTEPRSCYQLASKAPQKPGGTIACAAVVSPLGPSASSDNKLTALKKSENSINTLPTAAKPAPSPAERTTRTNTNDIQNSSLRNHLGASESSVSVSDFQVNQGDSHTSQAKGLKTVVPLTTSSEKQPPSESQITETPKSGLSSLVDVTGRQCMWLNNRDKTEALNGILSGGTCHEGQLEEAHLSPATPSADSVSTSARSAFDLPSPDKPEKTPGYIKFVPLSPWPKVNQTKTVGTATPSIPLFLKEKTVDLSGSRVITPVTFCKNVVLDDTRKNIESDPTSNSRAADTMSNWSIHLDPKGQPREERNATAQTVYDSSFPTEHVKAEPLISTVQQSHSQTVKVTDSPDPLTFSPGNNDWQSLVMNRLTEIEKLLSLESDNQPKRRKVEEMLDNIID.

Coiled coils occupy residues 47-134 and 178-391; these read KAET…QVSQ and LVRE…KTEE. 5 disordered regions span residues 568-600, 719-811, 854-883, 944-978, and 1003-1027; these read LDTR…SNPF, SENS…PKSG, LSPA…PEKT, KNIE…EERN, and VQQS…PGNN. Composition is skewed to polar residues over residues 591–600, 742–781, 789–811, 857–869, and 948–964; these read NTDGSESNPF, RTNT…TSQA, PLTT…PKSG, ATPS…TSAR, and SDPT…SNWS. The span at 967-978 shows a compositional bias: basic and acidic residues; sequence LDPKGQPREERN. Residues 1003–1013 show a composition bias toward polar residues; that stretch reads VQQSHSQTVKV.

This chain is Coiled-coil domain-containing protein 73 (Ccdc73), found in Mus musculus (Mouse).